The primary structure comprises 348 residues: Nicotinate-nucleotide pyrophosphorylase [carboxylating], chloroplastic (348 aa).

The transit peptide at 1–41 (MISVSRFLSPQFYAIPRSFVKMSASATQTAGEVSMGIKPPS) directs the protein to the chloroplast. Substrate-binding positions include R139, 170–172 (TRK), R194, K204, E237, D264, 296–298 (SGN), and 317–319 (SGA).

The protein belongs to the NadC/ModD family.

It is found in the plastid. Its subcellular location is the chloroplast. The catalysed reaction is nicotinate beta-D-ribonucleotide + CO2 + diphosphate = quinolinate + 5-phospho-alpha-D-ribose 1-diphosphate + 2 H(+). Its pathway is cofactor biosynthesis; NAD(+) biosynthesis; nicotinate D-ribonucleotide from quinolinate: step 1/1. Involved in the biosynthesis of NAD(+). Catalyzes the conversion of quinolate to nicotinate to nicotinate beta-D-ribonucleotide. The sequence is that of Nicotinate-nucleotide pyrophosphorylase [carboxylating], chloroplastic from Arabidopsis thaliana (Mouse-ear cress).